An 812-amino-acid polypeptide reads, in one-letter code: Mitochondrial intermediate peptidase (812 aa).

Residues 1–29 (MRLSRQLLRSTPFLTRAKPVSGKVSHFRS) constitute a mitochondrion transit peptide. Positions 19 to 49 (PVSGKVSHFRSRTDLKGGSSNSSKSPDSVGD) are disordered. A compositionally biased stretch (low complexity) spans 37-46 (SSNSSKSPDS). Histidine 595 is a binding site for Zn(2+). Glutamate 596 is a catalytic residue. Histidine 599 and histidine 602 together coordinate Zn(2+).

The protein belongs to the peptidase M3 family. Zn(2+) serves as cofactor.

It is found in the mitochondrion matrix. The catalysed reaction is Release of an N-terminal octapeptide as second stage of processing of some proteins imported into the mitochondrion.. Its function is as follows. Cleaves proteins, imported into the mitochondrion, to their mature size. While most mitochondrial precursor proteins are processed to the mature form in one step by mitochondrial processing peptidase (MPP), the sequential cleavage by MIP of an octapeptide after initial processing by MPP is a required step for a subgroup of nuclear-encoded precursor proteins destined for the matrix or the inner membrane. In Scheffersomyces stipitis (strain ATCC 58785 / CBS 6054 / NBRC 10063 / NRRL Y-11545) (Yeast), this protein is Mitochondrial intermediate peptidase (OCT1).